Here is a 205-residue protein sequence, read N- to C-terminus: Proteasome subunit beta type-3 (205 aa).

Belongs to the peptidase T1B family. As to quaternary structure, the 26S proteasome consists of a 20S proteasome core and two 19S regulatory subunits. The 20S proteasome core is composed of 28 subunits that are arranged in four stacked rings, resulting in a barrel-shaped structure. The two end rings are each formed by seven alpha subunits, and the two central rings are each formed by seven beta subunits. The catalytic chamber with the active sites is on the inside of the barrel.

Its subcellular location is the cytoplasm. The protein localises to the nucleus. In terms of biological role, non-catalytic component of the proteasome, a multicatalytic proteinase complex which is characterized by its ability to cleave peptides with Arg, Phe, Tyr, Leu, and Glu adjacent to the leaving group at neutral or slightly basic pH. The proteasome has an ATP-dependent proteolytic activity. The polypeptide is Proteasome subunit beta type-3 (Drosophila melanogaster (Fruit fly)).